The primary structure comprises 764 residues: Thyrotropin receptor (764 aa).

Positions M1–G21 are cleaved as a signal peptide. The Extracellular portion of the chain corresponds to K22–G413. C31 and C41 are joined by a disulfide. 2 N-linked (GlcNAc...) asparagine glycosylation sites follow: N77 and N99. LRR repeat units lie at residues L125 to T150, D151 to G174, C176 to G199, K201 to G223, F225 to H248, and K250 to H271. N-linked (GlcNAc...) asparagine glycans are attached at residues N177 and N198. Residue N302 is glycosylated (N-linked (GlcNAc...) asparagine). Y385 is subject to Sulfotyrosine. Residues Y414 to T441 traverse the membrane as a helical segment. Over S442–R450 the chain is Cytoplasmic. The chain crosses the membrane as a helical span at residues F451 to V473. Over D474–C494 the chain is Extracellular. A disulfide bridge connects residues C494 and C569. A helical transmembrane segment spans residues N495 to L517. The Cytoplasmic portion of the chain corresponds to E518 to H537. A helical transmembrane segment spans residues A538–I560. Over S561–L580 the chain is Extracellular. The helical transmembrane segment at A581–V602 threads the bilayer. The Cytoplasmic portion of the chain corresponds to K603–R625. A helical transmembrane segment spans residues M626–M649. At N650–K660 the chain is on the extracellular side. The helical transmembrane segment at I661–T682 threads the bilayer. The Cytoplasmic segment spans residues K683–L764. Residues P762–L764 carry the PDZ-binding motif.

This sequence belongs to the G-protein coupled receptor 1 family. FSH/LSH/TSH subfamily. Interacts with heterodimer GPHA2:GPHB5; this interaction stimulates cAMP production. Interacts (via the PDZ-binding motif) with SCRIB; regulates TSHR trafficking and function. Glycosylated. In terms of processing, sulfated. Sulfation on Tyr-385 plays a role in thyrotropin receptor binding and activation. As to expression, expressed in thyroide cells (at protein level).

It is found in the cell membrane. It localises to the basolateral cell membrane. Functionally, receptor for the thyroid-stimulating hormone (TSH) or thyrotropin. Also acts as a receptor for the heterodimeric glycoprotein hormone (GPHA2:GPHB5) or thyrostimulin. The activity of this receptor is mediated by G proteins which activate adenylate cyclase. Plays a central role in controlling thyroid cell metabolism. In Sus scrofa (Pig), this protein is Thyrotropin receptor (TSHR).